A 119-amino-acid chain; its full sequence is Ubiquinone biosynthesis accessory factor UbiK (119 aa).

Positions 79–99 (LLRTREKLALLEQRLSELEAR) form a coiled coil. The segment covering 96–106 (LEARDKPEEVK) has biased composition (basic and acidic residues). Residues 96 to 119 (LEARDKPEEVKPAPAIPPVDPQQE) are disordered. Residues 109 to 119 (PAIPPVDPQQE) show a composition bias toward pro residues.

Belongs to the UbiK family. Homotrimer.

It is found in the cytoplasm. Its pathway is cofactor biosynthesis; ubiquinone biosynthesis. Required for efficient ubiquinone (coenzyme Q) biosynthesis under aerobic conditions. UbiK is probably an accessory factor of Ubi enzymes and facilitates ubiquinone biosynthesis by acting as an assembly factor, a targeting factor, or both. Dispensable for ubiquinone biosynthesis under anaerobiosis. Required for proliferation in macrophages and virulence in mice. Significantly contributes to colonization and invasion as well as host inflammation and innate immunity after infection. In vitro, has membrane fusogenic activity at acidic pH. The protein is Ubiquinone biosynthesis accessory factor UbiK of Salmonella typhimurium (strain LT2 / SGSC1412 / ATCC 700720).